A 274-amino-acid chain; its full sequence is Thiazole synthase (274 aa).

The Schiff-base intermediate with DXP role is filled by lysine 115. 1-deoxy-D-xylulose 5-phosphate contacts are provided by residues glycine 176, alanine 202–glycine 203, and asparagine 224–serine 225.

The protein belongs to the ThiG family. As to quaternary structure, homotetramer. Forms heterodimers with either ThiH or ThiS.

Its subcellular location is the cytoplasm. The catalysed reaction is [ThiS sulfur-carrier protein]-C-terminal-Gly-aminoethanethioate + 2-iminoacetate + 1-deoxy-D-xylulose 5-phosphate = [ThiS sulfur-carrier protein]-C-terminal Gly-Gly + 2-[(2R,5Z)-2-carboxy-4-methylthiazol-5(2H)-ylidene]ethyl phosphate + 2 H2O + H(+). The protein operates within cofactor biosynthesis; thiamine diphosphate biosynthesis. In terms of biological role, catalyzes the rearrangement of 1-deoxy-D-xylulose 5-phosphate (DXP) to produce the thiazole phosphate moiety of thiamine. Sulfur is provided by the thiocarboxylate moiety of the carrier protein ThiS. In vitro, sulfur can be provided by H(2)S. The protein is Thiazole synthase of Psychrobacter cryohalolentis (strain ATCC BAA-1226 / DSM 17306 / VKM B-2378 / K5).